Consider the following 175-residue polypeptide: CASP-like protein 2C1 (175 aa).

The Cytoplasmic segment spans residues 1–7; sequence MVRLRET. Residues 8–28 form a helical membrane-spanning segment; that stretch reads EVILRLCIVFFILLSSCLIGL. Residues 29–51 are Extracellular-facing; the sequence is DSQTKEIAYIHKKVSFRYLLALE. Residues 52 to 72 form a helical membrane-spanning segment; the sequence is AELYINVVVAAYNLVQIGLGW. Over 73 to 91 the chain is Cytoplasmic; that stretch reads YNVEQKTSNPKWFSYLLDQ. Residues 92–112 traverse the membrane as a helical segment; it reads TAAYVVFAGTSAAAQHSLLVV. Topologically, residues 113 to 136 are extracellular; that stretch reads TGSRELQWMKWCYKFTRFCFQMGS. Residues 137-157 form a helical membrane-spanning segment; that stretch reads AIILNYIAAALMVLLSSISAF. Residues 158 to 175 lie on the Cytoplasmic side of the membrane; the sequence is NLFRLYSPKRFFSFKSSS.

It belongs to the Casparian strip membrane proteins (CASP) family. In terms of assembly, homodimer and heterodimers.

Its subcellular location is the cell membrane. This chain is CASP-like protein 2C1, found in Arabidopsis lyrata subsp. lyrata (Lyre-leaved rock-cress).